Here is a 1256-residue protein sequence, read N- to C-terminus: Bifunctional autolysin (1256 aa).

The N-terminal stretch at 1-29 is a signal peptide; it reads MAKKFNYKLPSMVALTLVGSAVTAHQVQA. Positions 103–138 are enriched in polar residues; the sequence is GDTRANQSATTNNTQPVAKSTSTTAPKTNTNVTNAG. 3 disordered regions span residues 103–151, 172–214, and 419–440; these read GDTR…NSEN, KTAA…KTSL, and TQST…PSTG. Low complexity-rich tracts occupy residues 172–196 and 421–439; these read KTAA…KVTT and STTT…KPST. The tract at residues 199–775 is N-acetylmuramoyl-L-alanine amidase; that stretch reads ASAQPRSVAA…AVAQPKTAVK (577 aa). GW domains lie at 443–517, 519–593, 612–686, 688–762, 784–859, 861–936, and 943–1017; these read TVAA…YNTA, SPVN…DTAK, TVSS…YNNA, SPVN…VPAA, TTQT…VQNL, KEVK…APTA, and AAKD…KELI. The endo-beta-N-acetylglucosaminidase stretch occupies residues 776–1256; it reads AYTVTKPQTT…GKYFDIPQYK (481 aa).

In the N-terminal section; belongs to the N-acetylmuramoyl-L-alanine amidase 2 family. This sequence in the C-terminal section; belongs to the glycosyl hydrolase 73 family. In terms of assembly, oligomer; forms a ring structure at the cell surface which is important for efficient partitioning of daughter cells after cell division. Undergoes proteolytic processing to generate the two extracellular lytic enzymes, probably at the septal region on the cell surface.

The protein resides in the secreted. The enzyme catalyses Hydrolyzes the link between N-acetylmuramoyl residues and L-amino acid residues in certain cell-wall glycopeptides.. The catalysed reaction is an N(4)-(oligosaccharide-(1-&gt;3)-[oligosaccharide-(1-&gt;6)]-beta-D-Man-(1-&gt;4)-beta-D-GlcNAc-(1-&gt;4)-alpha-D-GlcNAc)-L-asparaginyl-[protein] + H2O = an oligosaccharide-(1-&gt;3)-[oligosaccharide-(1-&gt;6)]-beta-D-Man-(1-&gt;4)-D-GlcNAc + N(4)-(N-acetyl-beta-D-glucosaminyl)-L-asparaginyl-[protein]. In terms of biological role, endohydrolysis of the di-N-acetylchitobiosyl unit in high-mannose glycopeptides and glycoproteins containing the -[(Man)5(GlcNAc)2]-Asn structure. One N-acetyl-D-glucosamine residue remains attached to the protein; the rest of the oligosaccharide is released intact. Cleaves the peptidoglycan connecting the daughter cells at the end of the cell division cycle, resulting in the separation of the two newly divided cells. Acts as an autolysin in penicillin-induced lysis. This is Bifunctional autolysin (atl) from Staphylococcus aureus (strain NCTC 8325 / PS 47).